Here is a 430-residue protein sequence, read N- to C-terminus: MRLISISTTIAFGFAFQAQAATELQWWHAMTGANNEMIEELTKEFNESQSTYKVVPVFKGTYPETLNAGIAAFRSKQPPAIIQVFDAGSGTMMAAEGAIVPAAEILQKGGFTFDKSQYLPGIVAYYSKPDGTMLSFPYNSSSPILYYNKDAFQKAGLNVDNPPKTWPEVFEAAKKIKTSGAAPCGMTSTWLTWIQTENFAAWNNVPYGTNENGLGGTDVKLQINAPLYVEHFQAIADLAKDGAFRYGGRTSEAKQLFTSGECAILTESSGGLGDIAKSGVNYGIGQLPYYEGHGPQNTIPGGASLWVFAGKSDEEYKGVAEFFNFLSQTEIQAKLHQVSGYMPVTMAAYEETKKSGFYEKNPGRETPLLQMMGKAPTENSKGVRLVNLPQVRDILNEEFEAMLSGQQDAKTALDKAVERGNAAIAAAISN.

The first 20 residues, 1 to 20 (MRLISISTTIAFGFAFQAQA), serve as a signal peptide directing secretion. Sn-glycerol 3-phosphate-binding residues include Y62, D86, S141, S268, G302, Y341, and R392.

The protein belongs to the bacterial solute-binding protein 1 family. In terms of assembly, the complex is composed of two ATP-binding proteins (UgpC), two transmembrane proteins (UgpA and UgpE) and a solute-binding protein (UgpB).

It is found in the periplasm. In terms of biological role, part of the ABC transporter complex UgpBAEC involved in sn-glycerol-3-phosphate (G3P) import. Binds G3P. This chain is sn-glycerol-3-phosphate-binding periplasmic protein UgpB (ugpB), found in Rhizobium meliloti (strain 1021) (Ensifer meliloti).